The primary structure comprises 70 residues: Large ribosomal subunit protein uL29 (70 aa).

This sequence belongs to the universal ribosomal protein uL29 family.

The polypeptide is Large ribosomal subunit protein uL29 (Clostridium botulinum (strain Alaska E43 / Type E3)).